The primary structure comprises 577 residues: MNIQSILSNKIKQAMRQAGADEQCDALVKPSGKPQFGDYQANGIMATAKKLGLNPRDFAQKVLDLIDLKNIAEKMEIAGPGFINIFLDKNWLAENIQVTLQDKKLGVTVEEIQTIVVDYSSPNVAKEMHVGHLRSTIIGDAVVRTLEFLGHNVIRANHVGDWGTQFGMLIAYLEKMENEHASAMELADLEAFYRAAKEHYDNDETFAEKARNYVVKLQNGDAYCRTMWKKLVDITMQQNQRNYDRLNVTLTQNDVMGESLYNPMLPEIVADLKAQGLAVEDEGAQVVYLEEFKNKDGDPMGVIVQKKDGGFLYTTTDIAAAKYRYHTLKADRALVFSDTRQSQHMQQAWLITRKAGYVPDSFQLEHKNFGMMLGKDGKPFKTRSGGTVKLTDLLDEAIERADKLISEKSTALSSKEKAAVIEAVGIGSVKYADLSKNRTTDYVFDWDIMLSFEGNTAPYMQYAYTRIRSIFNKTDISEEQLHPAKIQLTDEKERLLAIKLLQFEETVQIVGKEGTPHILCAYLYELAGLFSSFYEHCPILNNDNENVKLSRLKLALLTEKTLKQGLDLLGIKTVEKM.

The 'HIGH' region motif lies at 122–132 (PNVAKEMHVGH).

The protein belongs to the class-I aminoacyl-tRNA synthetase family. Monomer.

It is found in the cytoplasm. It catalyses the reaction tRNA(Arg) + L-arginine + ATP = L-arginyl-tRNA(Arg) + AMP + diphosphate. This chain is Arginine--tRNA ligase, found in Histophilus somni (strain 129Pt) (Haemophilus somnus).